The chain runs to 484 residues: Secreted RxLR effector protein 104 (484 aa).

An N-terminal signal peptide occupies residues Met1 to Gly24. The RxLR-dEER motif lies at Arg48–Arg65. Residue Asn175 is glycosylated (N-linked (GlcNAc...) asparagine). The disordered stretch occupies residues Glu324 to Val463. Positions Lys327 to Gly346 are enriched in polar residues. Over residues Ser402–Pro413 the composition is skewed to low complexity. A compositionally biased stretch (polar residues) spans Asp418–Leu428.

This sequence belongs to the RxLR effector family.

Its subcellular location is the secreted. The protein localises to the host nucleus. Its function is as follows. Secreted effector that completely suppresses the host cell death induced by cell death-inducing proteins. The protein is Secreted RxLR effector protein 104 of Plasmopara viticola (Downy mildew of grapevine).